A 465-amino-acid chain; its full sequence is E3 ubiquitin-protein ligase parkin (465 aa).

Residues 1-76 form the Ubiquitin-like domain; the sequence is MIVFVRFNSS…VHIVQRPWRK (76 aa). Position 65 is a phosphoserine; by PINK1 (serine 65). Positions 77–99 are disordered; sequence GQEMNATGGDDPRNAAGGCEREP. Residues 77–237 form a necessary for PINK1-dependent localization to mitochondria region; the sequence is GQEMNATGGD…LIATNSRNIT (161 aa). Residues 141–225 form an RING-type 0; atypical zinc finger; it reads SIYNSFYVYC…PTSDKETSVA (85 aa). Phosphothreonine; by PINK1 is present on threonine 175. The segment at 204-238 is SYT11 binding 1; sequence TSAEFFFKCGAHPTSDKETSVALHLIATNSRNITC. Threonine 217 is subject to Phosphothreonine. The tract at residues 234 to 465 is TRIAD supradomain; it reads RNITCITCTD…VCMGDHWFDV (232 aa). Zn(2+)-binding residues include cysteine 238, cysteine 241, cysteine 253, histidine 257, cysteine 260, cysteine 263, cysteine 289, cysteine 293, cysteine 332, and cysteine 337. The RING-type 1 zinc-finger motif lies at 238–293; it reads CITCTDVRSPVLVFQCNSRHVICLDCFHLYCVTRLNDRQFVHDPQLGYSLPCVAGC. Residues 257–293 form an SYT11 binding 2 region; the sequence is HVICLDCFHLYCVTRLNDRQFVHDPQLGYSLPCVAGC. An IBR-type zinc finger spans residues 313-377; sequence NRYQQYGAEE…CKEAYHEGEC (65 aa). Lysine 349 is covalently cross-linked (Glycyl lysine isopeptide (Lys-Gly) (interchain with G-Cter in ISG15)). 4 residues coordinate Zn(2+): cysteine 352, cysteine 360, cysteine 365, and cysteine 368. Lysine 369 is covalently cross-linked (Glycyl lysine isopeptide (Lys-Gly) (interchain with G-Cter in ISG15)). Histidine 373 and cysteine 377 together coordinate Zn(2+). Residues 378–410 form an REP region; that stretch reads SAVFEASGTTTQAYRVDERAAEQARWEAASKET. Zn(2+) contacts are provided by cysteine 418 and cysteine 421. An RING-type 2; atypical zinc finger spans residues 418–449; it reads CPRCHVPVEKNGGCMHMKCPQPQCRLEWCWNC. Cysteine 431 is an active-site residue. Cysteine 436, cysteine 441, cysteine 446, cysteine 449, cysteine 457, and histidine 461 together coordinate Zn(2+).

Belongs to the RBR family. Parkin subfamily. As to quaternary structure, forms an E3 ubiquitin ligase complex with UBE2L3 or UBE2L6. Mediates 'Lys-63'-linked polyubiquitination by associating with UBE2V1. Part of a SCF-like complex, consisting of PRKN, CUL1 and FBXW7. Interacts with SNCAIP. Binds to the C2A and C2B domains of SYT11. Interacts and regulates the turnover of SEPTIN5. Part of a complex, including STUB1, HSP70 and GPR37. The amount of STUB1 in the complex increases during ER stress. STUB1 promotes the dissociation of HSP70 from PRKN and GPR37, thus facilitating PRKN-mediated GPR37 ubiquitination. HSP70 transiently associates with unfolded GPR37 and inhibits the E3 activity of PRKN, whereas, STUB1 enhances the E3 activity of PRKN through promotion of dissociation of HSP70 from PRKN-GPR37 complexes. Interacts with PSMD4 and PACRG. Interacts with LRRK2. Interacts with RANBP2. Interacts with SUMO1 but not SUMO2, which promotes nuclear localization and autoubiquitination. Interacts (via first RING-type domain) with AIMP2 (via N-terminus). Interacts with PSMA7 and RNF41. Interacts with PINK1. Forms a complex with PINK1 and PARK7. Interacts with CHPF, the interaction with isoform 2 may facilitate PRKN transport into the mitochondria. Interacts with MFN2 (phosphorylated), promotes PRKN localization in dysfunctional depolarized mitochondria. Interacts with FBXO7; this promotes translocation to dysfunctional depolarized mitochondria. Interacts with ZNF746. Interacts with heat shock protein 70 family members, including HSPA1L, HSPA1A and HSPA8; interaction HSPA1L promotes translocation to damaged mitochondria. Interacts with BAG4 and, to a lesser extent, BAG5; interaction with BAG4 inhibits translocation to damaged mitochondria. Forms a complex with PRKN and PARK7. Interacts with AMBRA1. ISGylated. Conjugated to ubiquitin-like protein ISG15 upon IFN-beta stimulation. ISGylation positively regulates its E3 ligase activity. In terms of processing, auto-ubiquitinates in an E2-dependent manner leading to its own degradation. Also polyubiquitinated by RNF41 for proteasomal degradation. Post-translationally, S-nitrosylated. The inhibition of PRKN ubiquitin E3 ligase activity by S-nitrosylation could contribute to the degenerative process in PD by impairing the ubiquitination of PRKN substrates. Phosphorylated. Activation requires phosphorylation at Ser-65 by PINK1 and binding to PINK1 phosphorylated ubiquitin. Phosphorylation at Thr-175 by PINK1 and at Thr-217 is important for mitochondrial localization. Highly expressed in the brain including the substantia nigra. Expressed in heart, testis and skeletal muscle. Expression is down-regulated or absent in tumor biopsies, and absent in the brain of PARK2 patients. Overexpression protects dopamine neurons from kainate-mediated apoptosis. Found in serum (at protein level).

The protein resides in the cytoplasm. The protein localises to the cytosol. It is found in the nucleus. It localises to the endoplasmic reticulum. Its subcellular location is the mitochondrion. The protein resides in the mitochondrion outer membrane. The protein localises to the cell projection. It is found in the neuron projection. It localises to the postsynaptic density. Its subcellular location is the presynapse. The catalysed reaction is [E2 ubiquitin-conjugating enzyme]-S-ubiquitinyl-L-cysteine + [acceptor protein]-L-lysine = [E2 ubiquitin-conjugating enzyme]-L-cysteine + [acceptor protein]-N(6)-ubiquitinyl-L-lysine.. It participates in protein modification; protein ubiquitination. Its activity is regulated as follows. In the autoinhibited state the side chain of Phe-463 inserts into a hydrophobic groove in RING-0, occluding the ubiquitin acceptor site Cys-431, whereas the REP repressor element binds RING-1 and blocks its E2-binding site. Activation of PRKN requires 2 steps: (1) phosphorylation at Ser-65 by PINK1 and (2) binding to phosphorylated ubiquitin, leading to unlock repression of the catalytic Cys-431 by the RING-0 region via an allosteric mechanism and converting PRKN to its fully-active form. According to another report, phosphorylation at Ser-65 by PINK1 is not essential for activation and only binding to phosphorylated ubiquitin is essential to unlock repression. In addition, ISG15 conjugation positively regulates its ubiquitin E3 ligase activity by suppressing the intramolecular interaction that maintains its autoinhibited conformation. Functionally, functions within a multiprotein E3 ubiquitin ligase complex, catalyzing the covalent attachment of ubiquitin moieties onto substrate proteins. Substrates include SYT11 and VDAC1. Other substrates are BCL2, CCNE1, GPR37, RHOT1/MIRO1, MFN1, MFN2, STUB1, SNCAIP, SEPTIN5, TOMM20, USP30, ZNF746, MIRO1 and AIMP2. Mediates monoubiquitination as well as 'Lys-6', 'Lys-11', 'Lys-48'-linked and 'Lys-63'-linked polyubiquitination of substrates depending on the context. Participates in the removal and/or detoxification of abnormally folded or damaged protein by mediating 'Lys-63'-linked polyubiquitination of misfolded proteins such as PARK7: 'Lys-63'-linked polyubiquitinated misfolded proteins are then recognized by HDAC6, leading to their recruitment to aggresomes, followed by degradation. Mediates 'Lys-63'-linked polyubiquitination of a 22 kDa O-linked glycosylated isoform of SNCAIP, possibly playing a role in Lewy-body formation. Mediates monoubiquitination of BCL2, thereby acting as a positive regulator of autophagy. Protects against mitochondrial dysfunction during cellular stress, by acting downstream of PINK1 to coordinate mitochondrial quality control mechanisms that remove and replace dysfunctional mitochondrial components. Depending on the severity of mitochondrial damage and/or dysfunction, activity ranges from preventing apoptosis and stimulating mitochondrial biogenesis to regulating mitochondrial dynamics and eliminating severely damaged mitochondria via mitophagy. Activation and recruitment onto the outer membrane of damaged/dysfunctional mitochondria (OMM) requires PINK1-mediated phosphorylation of both PRKN and ubiquitin. After mitochondrial damage, functions with PINK1 to mediate the decision between mitophagy or preventing apoptosis by inducing either the poly- or monoubiquitination of VDAC1, respectively; polyubiquitination of VDAC1 promotes mitophagy, while monoubiquitination of VDAC1 decreases mitochondrial calcium influx which ultimately inhibits apoptosis. When cellular stress results in irreversible mitochondrial damage, promotes the autophagic degradation of dysfunctional depolarized mitochondria (mitophagy) by promoting the ubiquitination of mitochondrial proteins such as TOMM20, RHOT1/MIRO1, MFN1 and USP30. Preferentially assembles 'Lys-6'-, 'Lys-11'- and 'Lys-63'-linked polyubiquitin chains, leading to mitophagy. The PINK1-PRKN pathway also promotes fission of damaged mitochondria by PINK1-mediated phosphorylation which promotes the PRKN-dependent degradation of mitochondrial proteins involved in fission such as MFN2. This prevents the refusion of unhealthy mitochondria with the mitochondrial network or initiates mitochondrial fragmentation facilitating their later engulfment by autophagosomes. Regulates motility of damaged mitochondria via the ubiquitination and subsequent degradation of MIRO1 and MIRO2; in motor neurons, this likely inhibits mitochondrial intracellular anterograde transport along the axons which probably increases the chance of the mitochondria undergoing mitophagy in the soma. Involved in mitochondrial biogenesis via the 'Lys-48'-linked polyubiquitination of transcriptional repressor ZNF746/PARIS which leads to its subsequent proteasomal degradation and allows activation of the transcription factor PPARGC1A. Limits the production of reactive oxygen species (ROS). Regulates cyclin-E during neuronal apoptosis. In collaboration with CHPF isoform 2, may enhance cell viability and protect cells from oxidative stress. Independently of its ubiquitin ligase activity, protects from apoptosis by the transcriptional repression of p53/TP53. May protect neurons against alpha synuclein toxicity, proteasomal dysfunction, GPR37 accumulation, and kainate-induced excitotoxicity. May play a role in controlling neurotransmitter trafficking at the presynaptic terminal and in calcium-dependent exocytosis. May represent a tumor suppressor gene. This is E3 ubiquitin-protein ligase parkin from Homo sapiens (Human).